A 798-amino-acid chain; its full sequence is Gelsolin (798 aa).

The signal sequence occupies residues M1 to A28. The interval R57–F181 is actin-severing. Residues E78–G131 form a Gelsolin-like 1 repeat. Position 90 is a phosphotyrosine; by SRC (Y90). The interval D128–G131 is actin-actin interfilament contact point. A 1,2-diacyl-sn-glycero-3-phospho-(1D-myo-inositol-4,5-bisphosphate)-binding positions include K167–Q174 and R193–R201. Gelsolin-like repeat units follow at residues V203–L243, L322–T365, I474–K524, and V583–Q625. Positions M451–I792 are actin-binding, Ca-sensitive. Residue D599 coordinates Ca(2+). Y612 carries the phosphotyrosine; by SRC modification. E623 is a Ca(2+) binding site. Residue Y662 is modified to Phosphotyrosine; by SRC. A Gelsolin-like 6 repeat occupies L689–G730. 3 residues coordinate Ca(2+): D705, D706, and E728.

The protein belongs to the villin/gelsolin family. As to quaternary structure, binds to actin and to fibronectin. As to expression, isoform 1 and isoform 2 are ubiquitously expressed in early embryo. Isoform 1 is expressed in the fat body, and is abundant in hemolymph. Isoform 2 is expressed in parts of the gut.

Its subcellular location is the cytoplasm. The protein localises to the cytoskeleton. It is found in the secreted. In terms of biological role, calcium-regulated, actin-modulating protein that binds to the plus (or barbed) ends of actin monomers or filaments, preventing monomer exchange (end-blocking or capping). It can promote the assembly of monomers into filaments (nucleation) as well as sever filaments already formed. This is Gelsolin (Gel) from Drosophila melanogaster (Fruit fly).